The following is a 1000-amino-acid chain: Putative methyl-accepting chemotaxis protein sll0041 (1000 aa).

Residues 1 to 59 (MTQNPSSDRRPDTAQSVANGETLDGALFTGLTDTAAAQDESSETSASFATIDGEDKSEV) form a disordered region. GAF domains follow at residues 342-478 (EIQG…QTTL) and 509-650 (NSEQ…GLAL). The 52-residue stretch at 671–722 (EKMQKRALELLMEVDPVSRGDLTIRAHVTEDEIGTIADSYNATIESLRRIVT) folds into the HAMP domain. Residues 727–963 (AASQFTETTD…SVTQTMALVA (237 aa)) enclose the Methyl-accepting transducer domain.

Belongs to the methyl-accepting chemotaxis (MCP) protein family.

This chain is Putative methyl-accepting chemotaxis protein sll0041, found in Synechocystis sp. (strain ATCC 27184 / PCC 6803 / Kazusa).